The primary structure comprises 1531 residues: Non-structural polyprotein pORF1 (1531 aa).

Residues 56–239 (RFEPRDNWAH…HKREVLQDWI (184 aa)) form the Alphavirus-like MT domain. The segment at 60–239 (RDNWAHPVQR…HKREVLQDWI (180 aa)) is methyltransferase. The tract at residues 240 to 434 (TTTGVSGRHP…FYRQLATWIS (195 aa)) is Y-domain. A putative protease region spans residues 435–621 (GGLTIDFERR…RGQEEVLAVL (187 aa)). Residues 561–600 (PAVSAGPVPAPPGNPVIESVQGSGAGGPEVSESQPGLTPT) are disordered. The segment covering 591-600 (SESQPGLTPT) has biased composition (polar residues). Residues 612–761 (RGQEEVLAVL…VVQRSMAQHI (150 aa)) form the Macro domain. An X-domain region spans residues 622 to 786 (PSGARVIVGN…HVDRAMADMV (165 aa)). The (+)RNA virus helicase ATP-binding domain maps to 786–924 (VNYGLATEPE…DLGLQPTSWR (139 aa)). The segment at 803-1046 (GVEVAPMTVK…VTDAMFNNIE (244 aa)) is NTPase/helicase. An ATP-binding site is contributed by 818–825 (GVPGSGKS). The (+)RNA virus helicase C-terminal domain maps to 925–1058 (TVSHRCPWDV…LVRPDAAAPA (134 aa)). The RNA-directed RNA polymerase stretch occupies residues 1049 to 1531 (LVRPDAAAPA…LPVLNLSKED (483 aa)). The RdRp catalytic domain maps to 1295–1406 (HLVFENDFSE…VCESVRARPE (112 aa)).

The protein belongs to the hepevirus non-structural polyprotein family. The protease domain interacts with host EIF2AK4 (via C-terminus); this interaction inhibits dimerization of EIF2AK4 and prevents EIF2AK4-mediated phosphorylation of host EIF2A. Mg(2+) serves as cofactor. In terms of processing, ORF1 polyprotein does not seem to be processed into distinct enzymatic domains by a viral protease belonging to ORF1, but could be processed by a host serine protease like thrombin.

It localises to the host cytoplasm. The protein resides in the host perinuclear region. It carries out the reaction RNA(n) + a ribonucleoside 5'-triphosphate = RNA(n+1) + diphosphate. The enzyme catalyses GTP + S-adenosyl-L-methionine = N(7)-methyl-GTP + S-adenosyl-L-homocysteine. In terms of biological role, methyltransferase: Displays a capping enzyme activity. This function is necessary since all viral RNAs are synthesized in the cytoplasm, and host capping enzymes are restricted to the nucleus. The enzymatic reaction involves a covalent link between 7-methyl-GMP and the methyltransferase, whereas eukaryotic capping enzymes form a covalent complex only with GMP. Methyltransferase catalyzes transfer of a methyl group from S-adenosylmethionine to GTP and GDP to yield m(7)GTP or m(7)GDP. This enzyme also displays guanylyltransferase activity to form a covalent complex, methyltransferase-m(7)GMP, from which 7-methyl-GMP is transferred to the mRNA to create the cap structure. Its function is as follows. Y-domain: Indispensable for virus replication. Functionally, putative protease: The putative protease domain although necessary for replication of the virus may not be a protease but rather a structural Zn(2+)-binding domain. Inhibits induction of IFN-beta by MDA5 and RIG-I pathways and down-regulates the expression of MDA5. NTPase/helicase: Multi-functional protein that exhibits NTPase and RNA unwinding activities. Hydrolyzes all NTPs efficiently and unwinds RNA duplexes containing 5' overhangs. Possesses a sequence independent RNA-5'-triphosphatase (RTPase) activity suggestive of its role in forming viral cap structure. Also participates in viral genome replication, RNA translocation and genome packaging/unpackaging. In terms of biological role, RNA-directed RNA polymerase: Plays an essential role in the virus replication. Binds to the 3'-end of the genomic RNA to initiate viral replication. In Gallus gallus (Chicken), this protein is Non-structural polyprotein pORF1.